The sequence spans 309 residues: Ribosomal RNA small subunit methyltransferase H (309 aa).

S-adenosyl-L-methionine contacts are provided by residues 36 to 38 (AGH), aspartate 55, phenylalanine 81, aspartate 102, and glutamine 109.

This sequence belongs to the methyltransferase superfamily. RsmH family.

The protein resides in the cytoplasm. It carries out the reaction cytidine(1402) in 16S rRNA + S-adenosyl-L-methionine = N(4)-methylcytidine(1402) in 16S rRNA + S-adenosyl-L-homocysteine + H(+). In terms of biological role, specifically methylates the N4 position of cytidine in position 1402 (C1402) of 16S rRNA. This chain is Ribosomal RNA small subunit methyltransferase H, found in Mycoplasma genitalium (strain ATCC 33530 / DSM 19775 / NCTC 10195 / G37) (Mycoplasmoides genitalium).